Reading from the N-terminus, the 469-residue chain is Programmed cell death protein 4 (469 aa).

Met1 carries the post-translational modification N-acetylmethionine. Disordered stretches follow at residues Met1–Asn38 and Lys58–Gly128. Ser25 bears the Phosphoserine mark. The short motif at Lys58 to Arg64 is the Nuclear localization signal element. Residue Ser67 is modified to Phosphoserine; by PKB and RPS6KB1. 6 positions are modified to phosphoserine: Ser68, Ser71, Ser76, Ser78, Ser80, and Ser94. The short motif at Asp70–Ser76 is the Phosphodegron element. Over residues Gly74 to Asp83 the composition is skewed to low complexity. A compositionally biased stretch (gly residues) spans Lys114–Gly125. Tyr152 bears the Phosphotyrosine mark. The 122-residue stretch at Ala163–Gly284 folds into the MI 1 domain. The short motif at Asp241 to Leu250 is the Nuclear localization signal element. Residues Ser313 and Ser317 each carry the phosphoserine modification. In terms of domain architecture, MI 2 spans His326–Ser449. Ser457 carries the post-translational modification Phosphoserine; by PKB.

It belongs to the PDCD4 family. As to quaternary structure, interacts (via MI domains) with EIF4A2. Interacts (via MI domains) with EIF4A1 (via N-terminal domain). Heterotrimer with EIF4A1; one molecule of PDCD4 binds two molecules of EIF4A1. Interacts with EIF4G1. May form a complex with EIF4A1 and EIF4G1. The interaction between PDCD4 and EIF4A1 interferes with the interaction between EIF4A1 and EIF4G. When phosphorylated, interacts with BTRC and FBXW11. Polyubiquitinated, leading to its proteasomal degradation. Rapidly degraded in response to mitogens. Phosphorylation of the phosphodegron promotes interaction with BTRC and proteasomal degradation. Post-translationally, phosphorylated at Ser-67 by RPS6KB1 in response to mitogens; phosphorylation promotes proteasomal degradation of PDCD4. In terms of tissue distribution, up-regulated in proliferative cells. Highly expressed in epithelial cells of the mammary gland. Reduced expression in lung cancer and colon carcinoma.

It is found in the nucleus. Its subcellular location is the cytoplasm. Functionally, inhibits translation initiation and cap-dependent translation. May excert its function by hindering the interaction between EIF4A1 and EIF4G. Inhibits the helicase activity of EIF4A. Modulates the activation of JUN kinase. Down-regulates the expression of MAP4K1, thus inhibiting events important in driving invasion, namely, MAPK85 activation and consequent JUN-dependent transcription. May play a role in apoptosis. Tumor suppressor. Inhibits tumor promoter-induced neoplastic transformation. Binds RNA. This is Programmed cell death protein 4 (PDCD4) from Homo sapiens (Human).